Reading from the N-terminus, the 49-residue chain is Large ribosomal subunit protein bL33B (49 aa).

Belongs to the bacterial ribosomal protein bL33 family.

The chain is Large ribosomal subunit protein bL33B from Bacillus pumilus (strain SAFR-032).